Reading from the N-terminus, the 107-residue chain is Thioredoxin (107 aa).

The region spanning 2-107 (SVEAVVKQVD…GIRELIQANA (106 aa)) is the Thioredoxin domain. Active-site nucleophile residues include cysteine 34 and cysteine 37. Residues cysteine 34 and cysteine 37 are joined by a disulfide bond.

This sequence belongs to the thioredoxin family.

Its function is as follows. Participates in various redox reactions through the reversible oxidation of its active center dithiol to a disulfide and catalyzes dithiol-disulfide exchange reactions. This is Thioredoxin (TRX) from Echinococcus granulosus (Hydatid tapeworm).